A 274-amino-acid polypeptide reads, in one-letter code: Penicillin-insensitive murein endopeptidase (274 aa).

A signal peptide spans M1 to A19. Intrachain disulfides connect C44–C265, C187–C235, and C216–C223. Zn(2+)-binding residues include H110, H113, D120, D147, H150, and H211. Positions L228–I274 are disordered.

The protein belongs to the peptidase M74 family. Dimer. It depends on Zn(2+) as a cofactor.

It is found in the periplasm. With respect to regulation, inhibited by Zn(2+) at 10 mM and by metal chelating agents EDTA and 1,10-phenanthroline. Its function is as follows. Murein endopeptidase that cleaves the D-alanyl-meso-2,6-diamino-pimelyl amide bond that connects peptidoglycan strands. Likely plays a role in the removal of murein from the sacculus and could also play a role in the integration of nascent murein strands into the sacculus. This Escherichia coli (strain K12) protein is Penicillin-insensitive murein endopeptidase (mepA).